Here is a 729-residue protein sequence, read N- to C-terminus: MSKFIEPSNEEIKLEKLYQDMGLSDKEYDKVVEILGREPNFTEVGIFSVMWSEHCSYKHSKPFLKQFPTTGEHVLMGPGEGAGVVDIGDNQAVVFKVESHNHPSAIEPYQGAATGVGGIIRDIVSIGARPINLLNSLRFGELTVKQNQRLLKGVVSGIGGYGNCIGIPTTAGEIEFDERYDGNPLVNAMCVGIIDHDMVQKGTAKGVGNSVIYVGLKTGRDGIHGATFASEELTEESESKRPSVQIGDPFVGKKLMEATLEAITFDELVGIQDMGAAGLTSSSSEMAAKGGSGLHLRLDQVPTREPGISPYEMMLSETQERMLLVVEKGTEQKFLDLFNKHELDSAVIGEVTDTDRFVLTYDDEVYADIPVQPLADEAPVYILEGEEKEYNTSKNDYSNIDVHDTFIKLLQHPTIASKHHLYEQYDQQVGANTIIKPGLQASVVRVEGTQKAIASTIDGEARYVFNQPYEGGKMVVAEAYRNLIAVGATPLAMTDCLNYGSPEKKEIYQQLIDSTKGMSEACKVLQTPVVSGNVSLYNETRGTSIFPTPVVGMVGLIEDVSYLKEFKPKAGDKIYLVGETRDDFGGSQLEKLLYGSVNHEFESIDLSDEVSKGKLIKQAIRNGIASHVQTVGKGGLLVTLAKISAHYDLGMQAQLDVTNAQLFSETQGRYIVVVKEGQTLDIDQAQEIGHLTHQQLFDISNSDVKIKENVSDIKQKWEGAIVQCLTTQD.

His-54 is a catalytic residue. Residues Tyr-57 and Lys-96 each coordinate ATP. Position 98 (Glu-98) interacts with Mg(2+). Residues 99–102 and Arg-121 contribute to the substrate site; that span reads SHNH. The active-site Proton acceptor is His-100. Asp-122 is a binding site for Mg(2+). Gln-245 serves as a coordination point for substrate. Asp-273 contacts Mg(2+). Substrate is bound at residue 317–319; sequence ETQ. Residues Asp-495 and Gly-532 each coordinate ATP. Position 533 (Asn-533) interacts with Mg(2+). Ser-535 provides a ligand contact to substrate.

It belongs to the FGAMS family. Monomer. Part of the FGAM synthase complex composed of 1 PurL, 1 PurQ and 2 PurS subunits.

The protein localises to the cytoplasm. The enzyme catalyses N(2)-formyl-N(1)-(5-phospho-beta-D-ribosyl)glycinamide + L-glutamine + ATP + H2O = 2-formamido-N(1)-(5-O-phospho-beta-D-ribosyl)acetamidine + L-glutamate + ADP + phosphate + H(+). The protein operates within purine metabolism; IMP biosynthesis via de novo pathway; 5-amino-1-(5-phospho-D-ribosyl)imidazole from N(2)-formyl-N(1)-(5-phospho-D-ribosyl)glycinamide: step 1/2. Part of the phosphoribosylformylglycinamidine synthase complex involved in the purines biosynthetic pathway. Catalyzes the ATP-dependent conversion of formylglycinamide ribonucleotide (FGAR) and glutamine to yield formylglycinamidine ribonucleotide (FGAM) and glutamate. The FGAM synthase complex is composed of three subunits. PurQ produces an ammonia molecule by converting glutamine to glutamate. PurL transfers the ammonia molecule to FGAR to form FGAM in an ATP-dependent manner. PurS interacts with PurQ and PurL and is thought to assist in the transfer of the ammonia molecule from PurQ to PurL. This chain is Phosphoribosylformylglycinamidine synthase subunit PurL, found in Staphylococcus epidermidis (strain ATCC 12228 / FDA PCI 1200).